The following is a 310-amino-acid chain: Retrotransposon Gag-like protein 4 (310 aa).

A CCHC-type zinc finger spans residues 278–295 (QLCLYCSQSGHFTRDCLA).

Its function is as follows. Involved in cognitive function in the brain, possibly via the noradrenergic system. In Homo sapiens (Human), this protein is Retrotransposon Gag-like protein 4.